The chain runs to 455 residues: UDP-N-acetylmuramoylalanine--D-glutamate ligase (455 aa).

119 to 125 is a binding site for ATP; that stretch reads GTNGKTT.

Belongs to the MurCDEF family.

It is found in the cytoplasm. It carries out the reaction UDP-N-acetyl-alpha-D-muramoyl-L-alanine + D-glutamate + ATP = UDP-N-acetyl-alpha-D-muramoyl-L-alanyl-D-glutamate + ADP + phosphate + H(+). Its pathway is cell wall biogenesis; peptidoglycan biosynthesis. Functionally, cell wall formation. Catalyzes the addition of glutamate to the nucleotide precursor UDP-N-acetylmuramoyl-L-alanine (UMA). The chain is UDP-N-acetylmuramoylalanine--D-glutamate ligase from Listeria monocytogenes serovar 1/2a (strain ATCC BAA-679 / EGD-e).